The following is a 131-amino-acid chain: Transcription antitermination protein NusB (131 aa).

The protein belongs to the NusB family.

Functionally, involved in transcription antitermination. Required for transcription of ribosomal RNA (rRNA) genes. Binds specifically to the boxA antiterminator sequence of the ribosomal RNA (rrn) operons. The sequence is that of Transcription antitermination protein NusB from Agathobacter rectalis (strain ATCC 33656 / DSM 3377 / JCM 17463 / KCTC 5835 / VPI 0990) (Eubacterium rectale).